A 1214-amino-acid chain; its full sequence is Genome polyprotein (1214 aa).

Positions 1-55 (NKGKTFTSKYVIMTSNTETPVKPTSRRAGAFYRRVMIVDVTNNAVEKWKSDNPGK) constitute an SF3 helicase domain. Tyr428 is modified (O-(5'-phospho-RNA)-tyrosine). Positions 523 to 676 (GVAHKNAIVS…KLIVPYAKVD (154 aa)) constitute a Peptidase C24 domain. Catalysis depends on for 3CLpro activity residues His557, Glu578, and Cys640. The region spanning 926-1051 (HDRYCVDYSK…IVPPLISSVM (126 aa)) is the RdRp catalytic domain.

Specific enzymatic cleavages in vivo yield mature proteins. Pro-Pol is first autocatalytically cleaved, then processes the whole polyprotein. In terms of processing, VPg is uridylylated by the polymerase and is covalently attached to the 5'-end of the polyadenylated genomic and subgenomic RNAs. This uridylylated form acts as a nucleotide-peptide primer for the polymerase.

It carries out the reaction a ribonucleoside 5'-triphosphate + H2O = a ribonucleoside 5'-diphosphate + phosphate + H(+). The catalysed reaction is RNA(n) + a ribonucleoside 5'-triphosphate = RNA(n+1) + diphosphate. It catalyses the reaction Endopeptidase with a preference for cleavage when the P1 position is occupied by Glu-|-Xaa and the P1' position is occupied by Gly-|-Yaa.. NTPase presumably plays a role in replication. Despite having similarities with helicases, does not seem to display any helicase activity. In terms of biological role, viral genome-linked protein is covalently linked to the 5'-end of the positive-strand, negative-strand genomic RNAs and subgenomic RNA. Acts as a genome-linked replication primer. May recruit ribosome to viral RNA thereby promoting viral proteins translation. Functionally, protease-polymerase p76 processes the polyprotein: Pro-Pol is first released by autocleavage, then all other proteins are cleaved. Cleaves host translation initiation factor eIF4G1 and eIF4G2 thereby inducing a shutdown of host protein synthesis. This shutdown may not prevent viral mRNA from being translated since viral Vpg replaces the cap. May cleave host polyadenylate-binding protein thereby inhibiting cellular translation. It is also an RNA-directed RNA polymerase which replicates genomic and antigenomic viral RNA by recognizing specific signals. Also transcribes a subgenomic mRNA by initiating RNA synthesis internally on antigenomic RNA. This sgRNA codes for structural proteins. Catalyzes the covalent attachment VPg with viral RNAs. The sequence is that of Genome polyprotein from San Miguel sea lion virus serotype 4 (SMSV-4).